We begin with the raw amino-acid sequence, 892 residues long: Protein translocase subunit SecA (892 aa).

Residues Gln89, 107-111, and Asp517 each bind ATP; that span reads GEGKT. Positions 879, 881, 890, and 891 each coordinate Zn(2+).

It belongs to the SecA family. As to quaternary structure, monomer and homodimer. Part of the essential Sec protein translocation apparatus which comprises SecA, SecYEG and auxiliary proteins SecDF-YajC and YidC. Requires Zn(2+) as cofactor.

It localises to the cell inner membrane. Its subcellular location is the cytoplasm. It catalyses the reaction ATP + H2O + cellular proteinSide 1 = ADP + phosphate + cellular proteinSide 2.. Functionally, part of the Sec protein translocase complex. Interacts with the SecYEG preprotein conducting channel. Has a central role in coupling the hydrolysis of ATP to the transfer of proteins into and across the cell membrane, serving as an ATP-driven molecular motor driving the stepwise translocation of polypeptide chains across the membrane. This is Protein translocase subunit SecA from Ruthia magnifica subsp. Calyptogena magnifica.